The sequence spans 478 residues: Ribosomal RNA small subunit methyltransferase F (478 aa).

S-adenosyl-L-methionine-binding positions include 126-132, E150, D177, and D195; that span reads AAAPGSK. C248 acts as the Nucleophile in catalysis.

This sequence belongs to the class I-like SAM-binding methyltransferase superfamily. RsmB/NOP family.

The protein localises to the cytoplasm. It catalyses the reaction cytidine(1407) in 16S rRNA + S-adenosyl-L-methionine = 5-methylcytidine(1407) in 16S rRNA + S-adenosyl-L-homocysteine + H(+). Its function is as follows. Specifically methylates the cytosine at position 1407 (m5C1407) of 16S rRNA. This Erwinia tasmaniensis (strain DSM 17950 / CFBP 7177 / CIP 109463 / NCPPB 4357 / Et1/99) protein is Ribosomal RNA small subunit methyltransferase F.